We begin with the raw amino-acid sequence, 128 residues long: Sulfurtransferase TusD (128 aa).

Residue cysteine 78 is the Cysteine persulfide intermediate of the active site.

It belongs to the DsrE/TusD family. Heterohexamer, formed by a dimer of trimers. The hexameric TusBCD complex contains 2 copies each of TusB, TusC and TusD. The TusBCD complex interacts with TusE.

Its subcellular location is the cytoplasm. Its function is as follows. Part of a sulfur-relay system required for 2-thiolation of 5-methylaminomethyl-2-thiouridine (mnm(5)s(2)U) at tRNA wobble positions. Accepts sulfur from TusA and transfers it in turn to TusE. This is Sulfurtransferase TusD from Escherichia fergusonii (strain ATCC 35469 / DSM 13698 / CCUG 18766 / IAM 14443 / JCM 21226 / LMG 7866 / NBRC 102419 / NCTC 12128 / CDC 0568-73).